A 76-amino-acid chain; its full sequence is DNA polymerase III subunit theta (76 aa).

In terms of assembly, the DNA polymerase holoenzyme is a complex that contains 10 different types of subunits. These subunits are organized into 3 functionally essential subassemblies: the pol III core, the beta sliding clamp processivity factor and the clamp-loading complex. The pol III core (subunits alpha,epsilon and theta) contains the polymerase and the 3'-5' exonuclease proofreading activities. The polymerase is tethered to the template via the sliding clamp processivity factor. The clamp-loading complex assembles the beta processivity factor onto the primer template and plays a central role in the organization and communication at the replication fork. This complex contains delta, delta', psi and chi, and copies of either or both of two different DnaX proteins, gamma and tau. The composition of the holoenzyme is, therefore: (alpha,epsilon,theta)[2]-(gamma/tau)[3]-delta,delta', psi,chi-beta[4].

It carries out the reaction DNA(n) + a 2'-deoxyribonucleoside 5'-triphosphate = DNA(n+1) + diphosphate. DNA polymerase III is a complex, multichain enzyme responsible for most of the replicative synthesis in bacteria. This DNA polymerase also exhibits 3' to 5' exonuclease activity. In terms of biological role, the exact function of the theta subunit is unknown. This chain is DNA polymerase III subunit theta (holE), found in Escherichia coli O157:H7.